The chain runs to 292 residues: Enoyl-CoA hydratase domain-containing protein 2, mitochondrial (292 aa).

Residues methionine 1–leucine 35 constitute a mitochondrion transit peptide. At lysine 97 the chain carries N6-acetyllysine; alternate. At lysine 97 the chain carries N6-succinyllysine; alternate.

The protein belongs to the enoyl-CoA hydratase/isomerase family.

It is found in the mitochondrion. In Homo sapiens (Human), this protein is Enoyl-CoA hydratase domain-containing protein 2, mitochondrial (ECHDC2).